Reading from the N-terminus, the 305-residue chain is C alpha-dehydrogenase (305 aa).

NAD(+) is bound at residue 10 to 34 (FITGGASGAGFGQAKVFGQAGAKIV). A substrate-binding site is contributed by S144. Residue Y157 is the Proton acceptor of the active site.

Belongs to the short-chain dehydrogenases/reductases (SDR) family.

It participates in secondary metabolite metabolism; lignin degradation. Its function is as follows. Catalyzes the C alpha dehydrogenation of arylglycerol-beta-aryl ether (C alpha alcohol type) (compound IV). In Sphingobium sp. (strain NBRC 103272 / SYK-6), this protein is C alpha-dehydrogenase (ligD).